A 387-amino-acid polypeptide reads, in one-letter code: Phosphoglycerate kinase (387 aa).

Residues 21-23 (DLN), R36, 59-62 (HLGR), R113, and R146 contribute to the substrate site. Residues K197, E314, and 340-343 (GGDT) contribute to the ATP site.

Belongs to the phosphoglycerate kinase family. Monomer.

The protein resides in the cytoplasm. The enzyme catalyses (2R)-3-phosphoglycerate + ATP = (2R)-3-phospho-glyceroyl phosphate + ADP. The protein operates within carbohydrate degradation; glycolysis; pyruvate from D-glyceraldehyde 3-phosphate: step 2/5. The chain is Phosphoglycerate kinase from Cronobacter sakazakii (strain ATCC BAA-894) (Enterobacter sakazakii).